The sequence spans 168 residues: Putative B3 domain-containing protein Os10g0158600 (168 aa).

The segment at residues 4–97 is a DNA-binding region (TF-B3); sequence VVFASARLNA…KARVMLLNRQ (94 aa). The interval 105–151 is disordered; it reads KTPSTTSSDKNRSLSPSDQLTRASTSAHPSTSKSIPPLRNGTGSTKR. Polar residues predominate over residues 106 to 138; it reads TPSTTSSDKNRSLSPSDQLTRASTSAHPSTSKS.

The protein resides in the nucleus. The protein is Putative B3 domain-containing protein Os10g0158600 of Oryza sativa subsp. japonica (Rice).